A 173-amino-acid chain; its full sequence is MIIYKDILTGDEIISDAFNLKEVDNILWEVDCRNITIGDENIQLEGANPSAEGEDDDAGGAGNAEQVLDIKHNFRLNDYPKLEKDEYKKAIKGYMKKVLAKLEEKKAPEETIKEFKENAQTALKRILANYKDYDVLVGESFGADAMHILINYREDGVTPYATFWKHGLEEYKV.

The TCTP domain maps to 1-173 (MIIYKDILTG…WKHGLEEYKV (173 aa)).

The protein belongs to the TCTP family.

The protein resides in the cytoplasm. The protein localises to the cytoskeleton. In terms of biological role, involved in protein synthesis. Involved in microtubule stabilization. The protein is Translationally-controlled tumor protein homolog of Aspergillus oryzae (strain ATCC 42149 / RIB 40) (Yellow koji mold).